Consider the following 239-residue polypeptide: Ribonuclease PH (239 aa).

Residues Arg-86 and 124 to 126 (GTR) each bind phosphate.

It belongs to the RNase PH family. Homohexameric ring arranged as a trimer of dimers.

It catalyses the reaction tRNA(n+1) + phosphate = tRNA(n) + a ribonucleoside 5'-diphosphate. Phosphorolytic 3'-5' exoribonuclease that plays an important role in tRNA 3'-end maturation. Removes nucleotide residues following the 3'-CCA terminus of tRNAs; can also add nucleotides to the ends of RNA molecules by using nucleoside diphosphates as substrates, but this may not be physiologically important. Probably plays a role in initiation of 16S rRNA degradation (leading to ribosome degradation) during starvation. This Sinorhizobium fredii (strain NBRC 101917 / NGR234) protein is Ribonuclease PH.